A 293-amino-acid polypeptide reads, in one-letter code: 4-hydroxybenzoate octaprenyltransferase (293 aa).

The next 8 membrane-spanning stretches (helical) occupy residues 26–48 (PIGTLLLLYPTLWALFAAAGGMP), 98–118 (TEAKILFVLLLCIAFVLDLLL), 122–142 (TFLLSFVAVALAIIYPFMKRF), 145–165 (LPQVVLGMAFGWAIPMAYGAV), 167–187 (ESLPLECWLLFFANIFWTVAY), 218–238 (IIALLQFITLVLLVIFGWISQ), 241–261 (WGYFVVLGLSASLFSHQCWLT), and 272–292 (AFLNNHYFGLGVFFAILVGIY).

This sequence belongs to the UbiA prenyltransferase family. It depends on Mg(2+) as a cofactor.

The protein localises to the cell inner membrane. It catalyses the reaction all-trans-octaprenyl diphosphate + 4-hydroxybenzoate = 4-hydroxy-3-(all-trans-octaprenyl)benzoate + diphosphate. The protein operates within cofactor biosynthesis; ubiquinone biosynthesis. Catalyzes the prenylation of para-hydroxybenzoate (PHB) with an all-trans polyprenyl group. Mediates the second step in the final reaction sequence of ubiquinone-8 (UQ-8) biosynthesis, which is the condensation of the polyisoprenoid side chain with PHB, generating the first membrane-bound Q intermediate 3-octaprenyl-4-hydroxybenzoate. In Actinobacillus pleuropneumoniae serotype 3 (strain JL03), this protein is 4-hydroxybenzoate octaprenyltransferase.